Here is a 453-residue protein sequence, read N- to C-terminus: UDP-glycosyltransferase 76E9 (453 aa).

UDP-alpha-D-glucose-binding positions include S279, 337 to 339 (APQ), 354 to 362 (HCGWNSTLE), and 376 to 379 (TTDQ).

It belongs to the UDP-glycosyltransferase family.

This Arabidopsis thaliana (Mouse-ear cress) protein is UDP-glycosyltransferase 76E9 (UGT76E9).